We begin with the raw amino-acid sequence, 353 residues long: Mitochondrial distribution and morphology protein 10 (353 aa).

Belongs to the MDM10 family. In terms of assembly, component of the ER-mitochondria encounter structure (ERMES) or MDM complex, composed of MMM1, MDM10, MDM12 and MDM34. Associates with the mitochondrial outer membrane sorting assembly machinery SAM(core) complex.

It localises to the mitochondrion outer membrane. Component of the ERMES/MDM complex, which serves as a molecular tether to connect the endoplasmic reticulum and mitochondria. Components of this complex are involved in the control of mitochondrial shape and protein biogenesis and may function in phospholipid exchange. MDM10 is involved in the late assembly steps of the general translocase of the mitochondrial outer membrane (TOM complex). Functions in the TOM40-specific route of the assembly of outer membrane beta-barrel proteins, including the association of TOM40 with the receptor TOM22 and small TOM proteins. Can associate with the SAM(core) complex as well as the MDM12-MMM1 complex, both involved in late steps of the major beta-barrel assembly pathway, that is responsible for biogenesis of all outer membrane beta-barrel proteins. May act as a switch that shuttles between both complexes and channels precursor proteins into the TOM40-specific pathway. Plays a role in mitochondrial morphology and in the inheritance of mitochondria. This is Mitochondrial distribution and morphology protein 10 from Yarrowia lipolytica (strain CLIB 122 / E 150) (Yeast).